A 435-amino-acid chain; its full sequence is Temperature-sensitive sn-2 acyl-lipid omega-3 desaturase (ferredoxin), chloroplastic (435 aa).

The transit peptide at Met-1 to Pro-42 directs the protein to the chloroplast. 2 helical membrane-spanning segments follow: residues Met-111–Phe-131 and Trp-134–Leu-154. Positions His-156–His-160 match the Histidine box-1 motif. Positions His-192–His-196 match the Histidine box-2 motif. The next 2 membrane-spanning stretches (helical) occupy residues Val-268–Gly-290 and Leu-297–Gly-319. A Histidine box-3 motif is present at residues His-359 to His-363.

The protein belongs to the fatty acid desaturase type 1 family.

It is found in the plastid. Its subcellular location is the chloroplast membrane. The catalysed reaction is a (7Z,10Z)-hexadecadienoyl-containing glycerolipid + 2 reduced [2Fe-2S]-[ferredoxin] + O2 + 2 H(+) = a (7Z,10Z,13Z)-hexadecatrienoyl-containing glycerolipid + 2 oxidized [2Fe-2S]-[ferredoxin] + 2 H2O. It carries out the reaction a (9Z,12Z)-octadecadienoyl-containing glycerolipid + 2 reduced [2Fe-2S]-[ferredoxin] + O2 + 2 H(+) = (9Z,12Z,15Z)-octadecatrienoyl-containing glycerolipid + 2 oxidized [2Fe-2S]-[ferredoxin] + 2 H2O. It functions in the pathway lipid metabolism; polyunsaturated fatty acid biosynthesis. Chloroplast omega-3 fatty acid desaturase introduces the third double bond in the biosynthesis of 16:3 and 18:3 fatty acids, important constituents of plant membranes. It is thought to use ferredoxin as an electron donor and to act on fatty acids esterified to galactolipids, sulfolipids and phosphatidylglycerol. The chain is Temperature-sensitive sn-2 acyl-lipid omega-3 desaturase (ferredoxin), chloroplastic from Arabidopsis thaliana (Mouse-ear cress).